We begin with the raw amino-acid sequence, 221 residues long: PKHD-type hydroxylase A9601_13531 (221 aa).

Positions 80 to 174 (LIHGIMFTKS…RIVCVGWIES (95 aa)) constitute a Fe2OG dioxygenase domain. Residues His98, Asp100, and His155 each coordinate Fe cation. Arg165 is a 2-oxoglutarate binding site.

The cofactor is Fe(2+). L-ascorbate is required as a cofactor.

This Prochlorococcus marinus (strain AS9601) protein is PKHD-type hydroxylase A9601_13531.